A 119-amino-acid polypeptide reads, in one-letter code: Ribonuclease P protein component (119 aa).

It belongs to the RnpA family. Consists of a catalytic RNA component (M1 or rnpB) and a protein subunit.

It catalyses the reaction Endonucleolytic cleavage of RNA, removing 5'-extranucleotides from tRNA precursor.. Its function is as follows. RNaseP catalyzes the removal of the 5'-leader sequence from pre-tRNA to produce the mature 5'-terminus. It can also cleave other RNA substrates such as 4.5S RNA. The protein component plays an auxiliary but essential role in vivo by binding to the 5'-leader sequence and broadening the substrate specificity of the ribozyme. This Bifidobacterium longum (strain DJO10A) protein is Ribonuclease P protein component.